A 717-amino-acid chain; its full sequence is Photosystem I P700 chlorophyll a apoprotein A1 (717 aa).

Helical transmembrane passes span Val-58–Ala-81, Leu-144–His-167, Leu-183–Leu-207, Ile-279–Tyr-297, Trp-334–Tyr-357, Leu-373–Val-399, Ala-421–His-443, and Phe-519–Leu-537. [4Fe-4S] cluster is bound by residues Cys-561 and Cys-570. Helical transmembrane passes span His-577–Trp-598 and Leu-652–Phe-674. His-663 serves as a coordination point for chlorophyll a'. 2 residues coordinate chlorophyll a: Met-671 and Tyr-679. Trp-680 is a binding site for phylloquinone. Residues Ala-712–His-717 form a helical membrane-spanning segment.

It belongs to the PsaA/PsaB family. In terms of assembly, the PsaA/B heterodimer binds the P700 chlorophyll special pair and subsequent electron acceptors. PSI consists of a core antenna complex that captures photons, and an electron transfer chain that converts photonic excitation into a charge separation. The eukaryotic PSI reaction center is composed of at least 11 subunits. Requires P700 is a chlorophyll a/chlorophyll a' dimer, A0 is one or more chlorophyll a, A1 is one or both phylloquinones and FX is a shared 4Fe-4S iron-sulfur center. as cofactor.

The protein resides in the plastid. The protein localises to the chloroplast thylakoid membrane. The enzyme catalyses reduced [plastocyanin] + hnu + oxidized [2Fe-2S]-[ferredoxin] = oxidized [plastocyanin] + reduced [2Fe-2S]-[ferredoxin]. Its function is as follows. PsaA and PsaB bind P700, the primary electron donor of photosystem I (PSI), as well as the electron acceptors A0, A1 and FX. PSI is a plastocyanin-ferredoxin oxidoreductase, converting photonic excitation into a charge separation, which transfers an electron from the donor P700 chlorophyll pair to the spectroscopically characterized acceptors A0, A1, FX, FA and FB in turn. Oxidized P700 is reduced on the lumenal side of the thylakoid membrane by plastocyanin. The polypeptide is Photosystem I P700 chlorophyll a apoprotein A1 (Drimys winteri (Winter's bark)).